Here is a 460-residue protein sequence, read N- to C-terminus: Argininosuccinate lyase (460 aa).

Belongs to the lyase 1 family. Argininosuccinate lyase subfamily.

It localises to the cytoplasm. It carries out the reaction 2-(N(omega)-L-arginino)succinate = fumarate + L-arginine. It functions in the pathway amino-acid biosynthesis; L-arginine biosynthesis; L-arginine from L-ornithine and carbamoyl phosphate: step 3/3. The protein is Argininosuccinate lyase of Mannheimia succiniciproducens (strain KCTC 0769BP / MBEL55E).